Here is a 292-residue protein sequence, read N- to C-terminus: Ribosomal protein L11 methyltransferase (292 aa).

S-adenosyl-L-methionine contacts are provided by Thr144, Gly165, Asp187, and Asn229.

It belongs to the methyltransferase superfamily. PrmA family.

The protein localises to the cytoplasm. The catalysed reaction is L-lysyl-[protein] + 3 S-adenosyl-L-methionine = N(6),N(6),N(6)-trimethyl-L-lysyl-[protein] + 3 S-adenosyl-L-homocysteine + 3 H(+). In terms of biological role, methylates ribosomal protein L11. This chain is Ribosomal protein L11 methyltransferase, found in Saccharophagus degradans (strain 2-40 / ATCC 43961 / DSM 17024).